The following is a 462-amino-acid chain: MGTQALQGFLFLLFLPLLQPRGASAGSLHSPGLSECFQVNGADYRGHQNRTGPRGAGRPCLFWDQTQQHSYSSASDPHGRWGLGAHNFCRNPDGDVQPWCYVAETEEGIYWRYCDIPSCHMPGYLGCFVDSGAPPALSGPSGTSTKLTVQVCLRFCRMKGYQLAGVEAGYACFCGSESDLARGRLAPATDCDQICFGHPGQLCGGDGRLGVYEVSVGSCQGNWTAPQGVIYSPDFPDEYGPDRNCSWALGPPGAALELTFRLFELADPRDRLELRDAASGSLLRAFDGARPPPSGPLRLGTAALLLTFRSDARGHAQGFALTYRGLQDAAEDPEAPEGSAQTPAAPLDGANVSCSPRPGAPPAAIGARVFSTVTAVSVLLLLLLGLLRPLRRRSCLLAPGKGPPALGASRGPRRSWAVWYQQPRGVALPCSPGDPQAEGSAAGYRPLSASSQSSLRSLISAL.

The first 25 residues, 1 to 25 (MGTQALQGFLFLLFLPLLQPRGASA), serve as a signal peptide directing secretion. The Extracellular segment spans residues 26 to 364 (GSLHSPGLSE…SPRPGAPPAA (339 aa)). A Kringle domain is found at 35–119 (ECFQVNGADY…YWRYCDIPSC (85 aa)). Disulfide bonds link Cys-36/Cys-119, Cys-60/Cys-100, and Cys-89/Cys-114. N-linked (GlcNAc...) asparagine glycosylation is present at Asn-49. Residues 121–215 (MPGYLGCFVD…DGRLGVYEVS (95 aa)) form the WSC domain. A disulfide bond links Cys-219 and Cys-245. Positions 219–326 (CQGNWTAPQG…QGFALTYRGL (108 aa)) constitute a CUB domain. Asn-222, Asn-244, and Asn-351 each carry an N-linked (GlcNAc...) asparagine glycan. The disordered stretch occupies residues 328 to 352 (DAAEDPEAPEGSAQTPAAPLDGANV). Residues 365–387 (IGARVFSTVTAVSVLLLLLLGLL) form a helical membrane-spanning segment. The Cytoplasmic segment spans residues 388–462 (RPLRRRSCLL…SSLRSLISAL (75 aa)).

As to quaternary structure, interacts with ERLEC1. Forms a ternary complex with DKK1 and LRP6.

It localises to the membrane. Receptor for Dickkopf proteins. Cooperates with DKK1/2 to inhibit Wnt/beta-catenin signaling by promoting the endocytosis of Wnt receptors LRP5 and LRP6. Plays a role in limb development; attenuates Wnt signaling in the developing limb to allow normal limb patterning and can also negatively regulate bone formation. In Homo sapiens (Human), this protein is Kremen protein 2 (KREMEN2).